The sequence spans 255 residues: Proteasome subunit alpha type-3 (255 aa).

The residue at position 2 (S2) is an N-acetylserine. 3 positions are modified to N6-acetyllysine: K57, K206, and K230. Phosphoserine is present on residues S243 and S250.

Belongs to the peptidase T1A family. In terms of assembly, the 26S proteasome consists of a 20S proteasome core and two 19S regulatory subunits. The 20S proteasome core is a barrel-shaped complex made of 28 subunits that are arranged in four stacked rings. The two outer rings are each formed by seven alpha subunits, and the two inner rings are formed by seven beta subunits. The proteolytic activity is exerted by three beta-subunits PSMB5, PSMB6 and PSMB7. Interacts with AURKB. Interacts with CDKN1A. Interacts with MDM2 and RB1. Interacts with the C-terminus of TBXA2R isoform 2. Interacts with DNAJB2. Detected in liver (at protein level).

Its subcellular location is the cytoplasm. It is found in the nucleus. Functionally, component of the 20S core proteasome complex involved in the proteolytic degradation of most intracellular proteins. This complex plays numerous essential roles within the cell by associating with different regulatory particles. Associated with two 19S regulatory particles, forms the 26S proteasome and thus participates in the ATP-dependent degradation of ubiquitinated proteins. The 26S proteasome plays a key role in the maintenance of protein homeostasis by removing misfolded or damaged proteins that could impair cellular functions, and by removing proteins whose functions are no longer required. Associated with the PA200 or PA28, the 20S proteasome mediates ubiquitin-independent protein degradation. This type of proteolysis is required in several pathways including spermatogenesis (20S-PA200 complex) or generation of a subset of MHC class I-presented antigenic peptides (20S-PA28 complex). Binds to the C-terminus of CDKN1A and thereby mediates its degradation. Negatively regulates the membrane trafficking of the cell-surface thromboxane A2 receptor (TBXA2R) isoform 2. The chain is Proteasome subunit alpha type-3 (Psma3) from Mus musculus (Mouse).